Consider the following 262-residue polypeptide: Phosphomannomutase 1 (262 aa).

Ala-2 carries the post-translational modification N-acetylalanine. Catalysis depends on Asp-19, which acts as the Nucleophile. Residues Asp-19 and Asp-21 each contribute to the Mg(2+) site. The active-site Proton donor/acceptor is Asp-21. Residues Arg-28, Arg-132, Arg-143, Arg-150, Met-186, Ser-188, and Asp-190 each contribute to the alpha-D-mannose 1-phosphate site. Mg(2+) is bound by residues Asn-218, Tyr-230, Asp-232, and Thr-235. Ser-242 bears the Phosphoserine mark.

This sequence belongs to the eukaryotic PMM family. As to quaternary structure, homodimer. Mg(2+) is required as a cofactor. As to expression, present in brain, where it is restricted to neuronal cell bodies. Present at lower levels in pancreas, liver, lung, gonads, uterus, adrenal glands and pituitary (at protein level). Undetectable in intestine.

It is found in the cytoplasm. It carries out the reaction alpha-D-mannose 1-phosphate = D-mannose 6-phosphate. The protein operates within nucleotide-sugar biosynthesis; GDP-alpha-D-mannose biosynthesis; alpha-D-mannose 1-phosphate from D-fructose 6-phosphate: step 2/2. Its activity is regulated as follows. IMP, a metabolite whose concentration is elevated in anoxia, inhibits phosphomannomutase and phosphoglucomutase activities and strongly enhances glucose-1,6-bisphosphatase activity. Its function is as follows. Involved in the synthesis of the GDP-mannose and dolichol-phosphate-mannose required for a number of critical mannosyl transfer reactions. In addition, may be responsible for the degradation of glucose-1,6-bisphosphate in ischemic brain. The sequence is that of Phosphomannomutase 1 (Pmm1) from Mus musculus (Mouse).